A 245-amino-acid chain; its full sequence is 1-(5-phosphoribosyl)-5-[(5-phosphoribosylamino)methylideneamino] imidazole-4-carboxamide isomerase (245 aa).

The Proton acceptor role is filled by aspartate 7. Aspartate 129 functions as the Proton donor in the catalytic mechanism.

Belongs to the HisA/HisF family.

It is found in the cytoplasm. It carries out the reaction 1-(5-phospho-beta-D-ribosyl)-5-[(5-phospho-beta-D-ribosylamino)methylideneamino]imidazole-4-carboxamide = 5-[(5-phospho-1-deoxy-D-ribulos-1-ylimino)methylamino]-1-(5-phospho-beta-D-ribosyl)imidazole-4-carboxamide. It functions in the pathway amino-acid biosynthesis; L-histidine biosynthesis; L-histidine from 5-phospho-alpha-D-ribose 1-diphosphate: step 4/9. This is 1-(5-phosphoribosyl)-5-[(5-phosphoribosylamino)methylideneamino] imidazole-4-carboxamide isomerase from Shewanella pealeana (strain ATCC 700345 / ANG-SQ1).